Consider the following 162-residue polypeptide: KLAMCLVNLSRLKKGDVLLDPFCGTGGFLIEGGFMGLKLIGSDIDDDMVNGTLLNLKSYNLTEHIISIKKWNAGDIKSFLKQLNVKYVDGIVTDPPYGISTSAKGNIEEIFNNLGDVLKKDGYLVFASSRKINLDLELMEMYELYIHKSLTRYIHVYKKTDN.

Belongs to the methyltransferase superfamily. Trm-G10 family. In terms of assembly, monomer.

The protein localises to the cytoplasm. It carries out the reaction guanosine(10) in tRNA + 2 S-adenosyl-L-methionine = N(2)-dimethylguanosine(10) in tRNA + 2 S-adenosyl-L-homocysteine + 2 H(+). In terms of biological role, catalyzes the adenosylmethionine-dependent methylation of the exocyclic amino group (N(2)) of guanosine at position 10 of various tRNAs. Acts via a two-step process that leads to the formation of either N(2)-monomethyl (m(2)G) or N(2)-dimethylguanosine (m(2)(2)G). This Methanothermococcus thermolithotrophicus (Methanococcus thermolithotrophicus) protein is Probable tRNA (guanine(10)-N2)-dimethyltransferase (trmG10).